The chain runs to 347 residues: Large ribosomal subunit protein uL10 (347 aa).

The interval A310–G347 is disordered. The segment covering E325–G338 has biased composition (acidic residues).

The protein belongs to the universal ribosomal protein uL10 family. Part of the 50S ribosomal subunit. Forms part of the ribosomal stalk which helps the ribosome interact with GTP-bound translation factors. Forms a heptameric L10(L12)2(L12)2(L12)2 complex, where L10 forms an elongated spine to which the L12 dimers bind in a sequential fashion.

Its function is as follows. Forms part of the ribosomal stalk, playing a central role in the interaction of the ribosome with GTP-bound translation factors. The polypeptide is Large ribosomal subunit protein uL10 (Methanosarcina mazei (strain ATCC BAA-159 / DSM 3647 / Goe1 / Go1 / JCM 11833 / OCM 88) (Methanosarcina frisia)).